The following is a 357-amino-acid chain: MSAFVGKYADELIKNAKYIATPGKGILAADESTGTIGKRLASINVENIEANRQALRELLFTSPNALQYLSGVILFEETLYQKSSEGKPFVEILQENNVIPGIKVDKGVVELAGTDGETTTQGFDSLGARCQQYYKAGARFAKWRAVLKIGPNEPSELSIQQNAQGLARYAIICQENGLVLFVEPEILTDGSHDIAKCAAVTETVLAACYKALNDQHVLLEGTLLKPNMVTPGSDSPKVSPEVIGEYTVNALRRTVPAAVPGIVFLSGGQSEEQATLNLNAMNKFDVVKPWTLSFSFGRALQQSTLKTWSGKKENVGKAQDVFLARCKANSEATLGKYGGGSGTGLASESLHVKDYKY.

Substrate-binding residues include arginine 52 and lysine 142. Glutamate 183 functions as the Proton acceptor in the catalytic mechanism. The active-site Schiff-base intermediate with dihydroxyacetone-P is lysine 225.

This sequence belongs to the class I fructose-bisphosphate aldolase family.

The protein localises to the cytoplasm. It catalyses the reaction beta-D-fructose 1,6-bisphosphate = D-glyceraldehyde 3-phosphate + dihydroxyacetone phosphate. The protein operates within carbohydrate degradation; glycolysis; D-glyceraldehyde 3-phosphate and glycerone phosphate from D-glucose: step 4/4. In Pisum sativum (Garden pea), this protein is Fructose-bisphosphate aldolase, cytoplasmic isozyme 1.